The sequence spans 249 residues: Phosphatidylglycerol--prolipoprotein diacylglyceryl transferase (249 aa).

7 consecutive transmembrane segments (helical) span residues 11–31, 49–69, 82–102, 116–136, 163–183, 192–212, and 223–243; these read LKIYGYGAMIALGILAAVILL, AIVGIIGGILGGKLLYIIVDI, LGNGFVIYGAIIGGAISVYLY, LVVPSVALAQGFGRIGCFLAG, LHPTQIYSSIFDFLLAFFLLW, GRVFSLYVIIYGVGRVIVEFL, and LSTSQFISLFTIIIGIFVFNI. Position 129 (arginine 129) interacts with a 1,2-diacyl-sn-glycero-3-phospho-(1'-sn-glycerol).

It belongs to the Lgt family.

The protein localises to the cell membrane. It catalyses the reaction L-cysteinyl-[prolipoprotein] + a 1,2-diacyl-sn-glycero-3-phospho-(1'-sn-glycerol) = an S-1,2-diacyl-sn-glyceryl-L-cysteinyl-[prolipoprotein] + sn-glycerol 1-phosphate + H(+). The protein operates within protein modification; lipoprotein biosynthesis (diacylglyceryl transfer). Catalyzes the transfer of the diacylglyceryl group from phosphatidylglycerol to the sulfhydryl group of the N-terminal cysteine of a prolipoprotein, the first step in the formation of mature lipoproteins. This Clostridium tetani (strain Massachusetts / E88) protein is Phosphatidylglycerol--prolipoprotein diacylglyceryl transferase.